Here is a 224-residue protein sequence, read N- to C-terminus: Ribonuclease T (224 aa).

Over residues 1 to 11 (MSEDLYEDDLD) the composition is skewed to acidic residues. Residues 1–22 (MSEDLYEDDLDTQGSSGPRHPM) form a disordered region. The 175-residue stretch at 32-206 (VVVDVETGGF…YDTEKTAELF (175 aa)) folds into the Exonuclease domain. Positions 35, 37, 193, and 198 each coordinate Mg(2+). The active-site Proton donor/acceptor is His193.

It belongs to the RNase T family. In terms of assembly, homodimer. Mg(2+) serves as cofactor.

Functionally, trims short 3' overhangs of a variety of RNA species, leaving a one or two nucleotide 3' overhang. Responsible for the end-turnover of tRNA: specifically removes the terminal AMP residue from uncharged tRNA (tRNA-C-C-A). Also appears to be involved in tRNA biosynthesis. This Pseudomonas putida (strain ATCC 700007 / DSM 6899 / JCM 31910 / BCRC 17059 / LMG 24140 / F1) protein is Ribonuclease T.